The sequence spans 169 residues: Putative lipocalin R877 (169 aa).

Residues 1–18 form the signal peptide; the sequence is MWIIILIVIIVIITIIFS.

Belongs to the calycin superfamily. Lipocalin family.

It is found in the secreted. The protein resides in the virion. In terms of biological role, could play a role in the transport of a small ligand. The chain is Putative lipocalin R877 from Acanthamoeba polyphaga mimivirus (APMV).